Reading from the N-terminus, the 325-residue chain is Basic membrane protein A (325 aa).

The N-terminal stretch at 1 to 3 (FLS) is a signal peptide. A lipid anchor (N-palmitoyl cysteine) is attached at Cys4. Cys4 carries the S-diacylglycerol cysteine lipid modification.

The protein belongs to the BMP lipoprotein family. In terms of assembly, monomer.

It localises to the cell inner membrane. Its function is as follows. Immunogenic protein. May be part of an ABC-type nucleoside uptake system involved in the purine salvage pathway. The polypeptide is Basic membrane protein A (bmpA) (Borreliella afzelii (Borrelia afzelii)).